The sequence spans 508 residues: Aldehyde dehydrogenase family 7 member B4 (508 aa).

Residue 244-249 participates in NAD(+) binding; that stretch reads GSSRVG. Glu-266 acts as the Proton acceptor in catalysis. Cys-300 (nucleophile) is an active-site residue.

It belongs to the aldehyde dehydrogenase family. Homotetramer.

The catalysed reaction is an aldehyde + NAD(+) + H2O = a carboxylate + NADH + 2 H(+). This Arabidopsis thaliana (Mouse-ear cress) protein is Aldehyde dehydrogenase family 7 member B4 (ALDH7B4).